The chain runs to 261 residues: Phosphatidylglycerol--prolipoprotein diacylglyceryl transferase (261 aa).

4 helical membrane-spanning segments follow: residues Phe17–Gly37, Leu59–Tyr79, Ile94–Trp114, and Thr121–Gly141. Arg142 contacts a 1,2-diacyl-sn-glycero-3-phospho-(1'-sn-glycerol). Helical transmembrane passes span Pro174 to Tyr194 and Phe228 to Ile248.

This sequence belongs to the Lgt family.

It localises to the cell inner membrane. It catalyses the reaction L-cysteinyl-[prolipoprotein] + a 1,2-diacyl-sn-glycero-3-phospho-(1'-sn-glycerol) = an S-1,2-diacyl-sn-glyceryl-L-cysteinyl-[prolipoprotein] + sn-glycerol 1-phosphate + H(+). It functions in the pathway protein modification; lipoprotein biosynthesis (diacylglyceryl transfer). Functionally, catalyzes the transfer of the diacylglyceryl group from phosphatidylglycerol to the sulfhydryl group of the N-terminal cysteine of a prolipoprotein, the first step in the formation of mature lipoproteins. This is Phosphatidylglycerol--prolipoprotein diacylglyceryl transferase from Polynucleobacter asymbioticus (strain DSM 18221 / CIP 109841 / QLW-P1DMWA-1) (Polynucleobacter necessarius subsp. asymbioticus).